Here is a 148-residue protein sequence, read N- to C-terminus: UPF0178 protein DP1304 (148 aa).

Belongs to the UPF0178 family.

The sequence is that of UPF0178 protein DP1304 from Desulfotalea psychrophila (strain LSv54 / DSM 12343).